The following is a 155-amino-acid chain: uncharacterized protein (155 aa).

Positions 4–65 (IDEVDEIILR…IIDHSFLGEF (62 aa)) constitute an HTH asnC-type domain. Positions 23-42 (LTELSRKVGLTPAAIKNRVE) form a DNA-binding region, H-T-H motif.

This is an uncharacterized protein from Pyrococcus furiosus (strain ATCC 43587 / DSM 3638 / JCM 8422 / Vc1).